Consider the following 424-residue polypeptide: Probable threonylcarbamoyladenosine tRNA methylthiotransferase (424 aa).

An MTTase N-terminal domain is found at 1-106 (MRVAIETYGC…VVDAVYSALN (106 aa)). [4Fe-4S] cluster contacts are provided by C10, C44, C73, C143, C147, and C150. The Radical SAM core domain occupies 129-359 (LRENAIAIVS…TDLMRKIGLE (231 aa)). In terms of domain architecture, TRAM spans 362 to 420 (KRFVGKKLRVLVTKEGKNGRNLARMNSYRAVVTEGAVGEFVEVKIKDCRFNYLIGQLAA).

Belongs to the methylthiotransferase family. CDKAL1 subfamily. [4Fe-4S] cluster is required as a cofactor.

The catalysed reaction is N(6)-L-threonylcarbamoyladenosine(37) in tRNA + (sulfur carrier)-SH + AH2 + 2 S-adenosyl-L-methionine = 2-methylsulfanyl-N(6)-L-threonylcarbamoyladenosine(37) in tRNA + (sulfur carrier)-H + 5'-deoxyadenosine + L-methionine + A + S-adenosyl-L-homocysteine + 2 H(+). Functionally, catalyzes the methylthiolation of N6-threonylcarbamoyladenosine (t(6)A), leading to the formation of 2-methylthio-N6-threonylcarbamoyladenosine (ms(2)t(6)A) at position 37 in tRNAs that read codons beginning with adenine. The polypeptide is Probable threonylcarbamoyladenosine tRNA methylthiotransferase (Archaeoglobus fulgidus (strain ATCC 49558 / DSM 4304 / JCM 9628 / NBRC 100126 / VC-16)).